The sequence spans 483 residues: Probable cytosol aminopeptidase (483 aa).

Mn(2+) is bound by residues lysine 252 and aspartate 257. The active site involves lysine 264. Positions 275, 334, and 336 each coordinate Mn(2+). Arginine 338 is an active-site residue.

The protein belongs to the peptidase M17 family. Mn(2+) is required as a cofactor.

It localises to the cytoplasm. It carries out the reaction Release of an N-terminal amino acid, Xaa-|-Yaa-, in which Xaa is preferably Leu, but may be other amino acids including Pro although not Arg or Lys, and Yaa may be Pro. Amino acid amides and methyl esters are also readily hydrolyzed, but rates on arylamides are exceedingly low.. The catalysed reaction is Release of an N-terminal amino acid, preferentially leucine, but not glutamic or aspartic acids.. Presumably involved in the processing and regular turnover of intracellular proteins. Catalyzes the removal of unsubstituted N-terminal amino acids from various peptides. In Legionella pneumophila (strain Corby), this protein is Probable cytosol aminopeptidase.